The chain runs to 795 residues: MTEQKHEEYGADSIQVLEGLEAVPKRPGMYIGDTQDGSGLHHMVFEVLDNAIDEALAGHCDKITVTIHADHSVSVADNGRGMPTGIHPKEGRSAAEVIMTVLHAGGKFDNNSYKISGGLHGVGVSVVNALSDWVTLTIYRDGKEHFVRFVRGETEEPLKIVGDSDKKGTTVRFLAGTETFGNIEYSFDILAKRIRELSFLNNGVDIELTDERDGKHESFALSGGVAGFVQYMNRKKTPLHEKIFYAFGEKDGMSVECAMQWNDSYQESVQCFTNNIPQRDGGTHLTALRQVMTRTINSYIEANEVAKKAKVETAGDDMREGLTCVLSVKLPDPKFSSQTKDKLVSGEIGPVVNEVINQALTDFLEENPNEAKIITGKIVDAARARQAARKAREITRRKGLMDGLGLPGKLADCQEKDPALSELYLVEGNSAGGSAMQGRDRKFQAILPLKGKILNVEKARFEKMLASQEVATLITALGAGIGKEEFNPEKLRYHRIIIMTDADVDGAHIRTLLLTFFYRQMPDLVERGYIYIAQPPLYKAKYGKQERYLKDELEKDQWLLGLALEKAKIVSDGRTIEGAELADTAKQFLLAKTVIEQESRFVDELVLRAMLHASPIDLTSSENADKAVAELSGLLDEKEAALERIEGHEGHQFIKITRKLHGNVMVSYIEPKFLNSKAYQTLTQTAAALKGLVGEGAKLYKGENEYDADSFETALDILMSVAQKGMSIQRYKGLGEMNPEQLWETTMDPTVRRLLKVRIEDRIADEVFVTLMGDEVEPRRAFIENNALIAQNIDA.

The region spanning 421-536 (SELYLVEGNS…RGYIYIAQPP (116 aa)) is the Toprim domain. Positions 427, 501, and 503 each coordinate Mg(2+).

It belongs to the type II topoisomerase GyrB family. As to quaternary structure, heterotetramer, composed of two GyrA and two GyrB chains. In the heterotetramer, GyrA contains the active site tyrosine that forms a transient covalent intermediate with DNA, while GyrB binds cofactors and catalyzes ATP hydrolysis. Mg(2+) is required as a cofactor. Requires Mn(2+) as cofactor. It depends on Ca(2+) as a cofactor.

The protein localises to the cytoplasm. It catalyses the reaction ATP-dependent breakage, passage and rejoining of double-stranded DNA.. Its function is as follows. A type II topoisomerase that negatively supercoils closed circular double-stranded (ds) DNA in an ATP-dependent manner to modulate DNA topology and maintain chromosomes in an underwound state. Negative supercoiling favors strand separation, and DNA replication, transcription, recombination and repair, all of which involve strand separation. Also able to catalyze the interconversion of other topological isomers of dsDNA rings, including catenanes and knotted rings. Type II topoisomerases break and join 2 DNA strands simultaneously in an ATP-dependent manner. This is Antibiotic resistant DNA gyrase subunit B from Neisseria gonorrhoeae.